Consider the following 99-residue polypeptide: Photosystem II reaction center Psb28 protein (99 aa).

The protein belongs to the Psb28 family. As to quaternary structure, part of the photosystem II complex.

Its subcellular location is the cell inner membrane. The polypeptide is Photosystem II reaction center Psb28 protein (Gloeobacter violaceus (strain ATCC 29082 / PCC 7421)).